The following is a 597-amino-acid chain: MVIEQQITGAIIAGIKELYGADVTASQVQLQKTKKEFKGHLTLVVFPFLRMSKKSPEQTAQEIGEYLLRNEPAVAEFNVIKGFLNLTVACSCWIDLLNSINEQPAYGIIPVTEQSPLVMIEYSSPNTNKPLHLGHVRNNLLGYSLSKIIKANGNQIVKTNIVNDRGIHICKSMLAWQKWGNGATPESTGKKGDHLIGDFYVLFSNKLKEETHALEAKGLTKEEAEAQSTLMAEAREMLRKWEAGDKEVRALWEMMNNWVYAGFNETYKMMGVDFDKIYYESQTYLEGKGKVMEGLEKGIFYRREDGSVWADLTKDGLDEKLLLRADGTSVYMTQDIGTAKLRFDDYPINKMIYVVGNEQNYHFQVLSILLDKLGFEFGKGLVHFSYGMVELPEGKMKSREGTVVDADDLMAEMISTAREISQELGKLDEMTPEEAENIARIVGLGSLKYFILKVDPRKNMTFNPKESIDFNGNTGPFIQYTYARIRSVLRKAAEQGIVLPEQLPLTFAISEKEENLIQMIADYAEIVKEAGKLYSPACVANYIYDLVKEYNQFYHDFSILREENPELKNFRLVLSANVAKIVKSGMDLLGIEVPERM.

The 'HIGH' region signature appears at 125–135; the sequence is PNTNKPLHLGH.

This sequence belongs to the class-I aminoacyl-tRNA synthetase family. Monomer.

It is found in the cytoplasm. The enzyme catalyses tRNA(Arg) + L-arginine + ATP = L-arginyl-tRNA(Arg) + AMP + diphosphate. This is Arginine--tRNA ligase from Parabacteroides distasonis (strain ATCC 8503 / DSM 20701 / CIP 104284 / JCM 5825 / NCTC 11152).